The following is a 563-amino-acid chain: 3-oxosteroid 1-dehydrogenase (563 aa).

Aspartate 7–lysine 36 contributes to the FAD binding site.

The protein belongs to the FAD-dependent oxidoreductase 2 family. 3-oxosteroid dehydrogenase subfamily. The cofactor is FAD.

The catalysed reaction is a 3-oxosteroid + A = a 3-oxo-Delta(1)-steroid + AH2. The enzyme catalyses a 3-oxo-Delta(4)-steroid + A = a 3-oxo-Delta(1,4)-steroid + AH2. It carries out the reaction 3-oxochol-4-en-22-oyl-CoA + NAD(+) = 3-oxochola-1,4-dien-22-oyl-CoA + NADH + H(+). In terms of biological role, involved in the degradation of cholesterol. Catalyzes the elimination of the C-1 and C-2 hydrogen atoms of the A-ring from the polycyclic ring structure of 3-ketosteroids. Has a clear preference for 3-ketosteroids with a saturated A-ring, displaying highest activity on 5alpha-AD (5alpha-androstane-3,17-dione) and 5alpha-T (5alpha-testosterone, also known as 17beta-hydroxy-5alpha-androstane-3-one). Is also involved in the formation of 3-keto-1,4-diene-steroid from 3-keto-4-ene-steroid. Catalyzes the conversion of 3-oxo-23,24-bisnorchol-4-en-22-oyl-coenzyme A thioester (4-BNC-CoA) to 3-oxo-23,24-bisnorchola-1,4-dien-22-oyl-coenzyme A thioester (1,4-BNC-CoA). The sequence is that of 3-oxosteroid 1-dehydrogenase (kstD) from Mycobacterium tuberculosis (strain ATCC 25618 / H37Rv).